The following is a 415-amino-acid chain: Palmitoyl-acyl carrier protein thioesterase, chloroplastic (415 aa).

Low complexity-rich tracts occupy residues 1 to 16 and 24 to 41; these read MVAT…LPSA and KLGN…KSTP. A chloroplast-targeting transit peptide spans 1–60; that stretch reads MVATAASSAFFPLPSADTSSRPGKLGNKPSSLSPLKPKSTPNGGLQVKANASAPPKINGS. Residues 1–81 are disordered; that stretch reads MVATAASSAF…QEDAHSAPPP (81 aa). Residues N314, H316, and C351 contribute to the active site.

It belongs to the acyl-ACP thioesterase family.

It localises to the plastid. The protein resides in the chloroplast. It carries out the reaction hexadecanoyl-[ACP] + H2O = hexadecanoate + holo-[ACP] + H(+). Functionally, plays an essential role in chain termination during de novo fatty acid synthesis. High thioesterase activity for palmitoyl-ACP versus other acyl-ACPs. The chain is Palmitoyl-acyl carrier protein thioesterase, chloroplastic (FATB1) from Cuphea hookeriana (Cigar plant).